A 47-amino-acid chain; its full sequence is PhoP/PhoQ regulator MgrB (47 aa).

The helical transmembrane segment at 6–26 (WVVLGIVVVVCLLLWAQVFNI) threads the bilayer.

Belongs to the MgrB family. In terms of assembly, may form homooligomers. Probably interacts with the periplasmic domain of PhoQ.

The protein localises to the cell inner membrane. Its function is as follows. PhoP-regulated transcription is redox-sensitive, being activated when the periplasm becomes more reducing. MgrB acts between DsbA/DsbB and PhoP/PhoQ in this pathway. Represses PhoP/PhoQ signaling, possibly by binding to the periplasmic domain of PhoQ, altering its activity and that of downstream effector PhoP. The polypeptide is PhoP/PhoQ regulator MgrB (Salmonella gallinarum (strain 287/91 / NCTC 13346)).